We begin with the raw amino-acid sequence, 282 residues long: ATP synthase gamma chain (282 aa).

The protein belongs to the ATPase gamma chain family. As to quaternary structure, F-type ATPases have 2 components, CF(1) - the catalytic core - and CF(0) - the membrane proton channel. CF(1) has five subunits: alpha(3), beta(3), gamma(1), delta(1), epsilon(1). CF(0) has three main subunits: a, b and c.

It localises to the cell membrane. Its function is as follows. Produces ATP from ADP in the presence of a proton gradient across the membrane. The gamma chain is believed to be important in regulating ATPase activity and the flow of protons through the CF(0) complex. The chain is ATP synthase gamma chain from Clostridium botulinum (strain ATCC 19397 / Type A).